The sequence spans 456 residues: Hydroxymethylglutaryl-CoA synthase ERG13 (456 aa).

A (3S)-3-hydroxy-3-methylglutaryl-CoA-binding site is contributed by Ala35. The Proton donor/acceptor role is filled by Glu86. (3S)-3-hydroxy-3-methylglutaryl-CoA contacts are provided by Cys118, Asn156, Thr160, Ser210, His259, Lys268, Asn336, and Ser370. Cys118 acts as the Acyl-thioester intermediate in catalysis. His259 serves as the catalytic Proton donor/acceptor.

This sequence belongs to the thiolase-like superfamily. HMG-CoA synthase family.

The catalysed reaction is acetoacetyl-CoA + acetyl-CoA + H2O = (3S)-3-hydroxy-3-methylglutaryl-CoA + CoA + H(+). It participates in metabolic intermediate biosynthesis; (R)-mevalonate biosynthesis; (R)-mevalonate from acetyl-CoA: step 2/3. Functionally, hydroxymethylglutaryl-CoA synthase; part of the first module of ergosterol biosynthesis pathway that includes the early steps of the pathway, conserved across all eukaryotes, and which results in the formation of mevalonate from acetyl-coenzyme A (acetyl-CoA). ERG13 condenses acetyl-CoA with acetoacetyl-CoA to form hydroxymethylglutaryl-CoA (HMG-CoA). The first module starts with the action of the cytosolic acetyl-CoA acetyltransferase ERG10B that catalyzes the formation of acetoacetyl-CoA. The hydroxymethylglutaryl-CoA synthases ERG13 then condenses acetyl-CoA with acetoacetyl-CoA to form HMG-CoA. The rate-limiting step of the early module is the reduction to mevalonate by the 3-hydroxy-3-methylglutaryl-coenzyme A (HMG-CoA) reductases HMG1. This Gibberella zeae (strain ATCC MYA-4620 / CBS 123657 / FGSC 9075 / NRRL 31084 / PH-1) (Wheat head blight fungus) protein is Hydroxymethylglutaryl-CoA synthase ERG13.